Consider the following 137-residue polypeptide: ER-derived vesicles protein erv14 (137 aa).

Residues 1–9 (MMSFGSFVY) lie on the Cytoplasmic side of the membrane. A helical transmembrane segment spans residues 10–30 (IACLLLNGANMLLQIFCVIMF). Residues 31-62 (SDLEMDYINPIDLCNKLNDLVMPEIISHTLVT) are Extracellular-facing. A helical membrane pass occupies residues 63–83 (LLLLLGKKWLLFLANLPLLVF). At 84 to 114 (HANQVIHKTHILDATEIFRQLGRHKRDNFIK) the chain is on the cytoplasmic side. Residues 115 to 135 (VTFYLIMFFTLLYCMVMSLIQ) traverse the membrane as a helical segment. The Extracellular segment spans residues 136–137 (EE).

This sequence belongs to the cornichon family.

Its subcellular location is the endoplasmic reticulum. It localises to the membrane. The protein resides in the golgi apparatus membrane. Its function is as follows. Regulates export of the secretory proteins from the endoplasmic reticulum in COPII-coated vesicles. In Schizosaccharomyces pombe (strain 972 / ATCC 24843) (Fission yeast), this protein is ER-derived vesicles protein erv14 (erv14).